We begin with the raw amino-acid sequence, 468 residues long: Ribulose bisphosphate carboxylase large chain (468 aa).

Lysine 7 carries the N6,N6,N6-trimethyllysine modification. Substrate-binding residues include asparagine 116 and threonine 166. Lysine 168 serves as the catalytic Proton acceptor. Lysine 170 serves as a coordination point for substrate. 3 residues coordinate Mg(2+): lysine 194, aspartate 196, and glutamate 197. An N6-carboxylysine modification is found at lysine 194. Histidine 287 acts as the Proton acceptor in catalysis. Positions 288, 320, and 372 each coordinate substrate.

It belongs to the RuBisCO large chain family. Type I subfamily. As to quaternary structure, heterohexadecamer of 8 large chains and 8 small chains; disulfide-linked. The disulfide link is formed within the large subunit homodimers. Mg(2+) is required as a cofactor. In terms of processing, the disulfide bond which can form in the large chain dimeric partners within the hexadecamer appears to be associated with oxidative stress and protein turnover.

The protein localises to the plastid. The protein resides in the chloroplast. It carries out the reaction 2 (2R)-3-phosphoglycerate + 2 H(+) = D-ribulose 1,5-bisphosphate + CO2 + H2O. It catalyses the reaction D-ribulose 1,5-bisphosphate + O2 = 2-phosphoglycolate + (2R)-3-phosphoglycerate + 2 H(+). Functionally, ruBisCO catalyzes two reactions: the carboxylation of D-ribulose 1,5-bisphosphate, the primary event in carbon dioxide fixation, as well as the oxidative fragmentation of the pentose substrate in the photorespiration process. Both reactions occur simultaneously and in competition at the same active site. The chain is Ribulose bisphosphate carboxylase large chain from Cornus alternifolia (Pagoda dogwood).